Consider the following 312-residue polypeptide: tRNA dimethylallyltransferase (312 aa).

Residue 15-22 (GPTAAGKS) coordinates ATP. Residue 17–22 (TAAGKS) coordinates substrate. Positions 40 to 43 (DSMQ) are interaction with substrate tRNA.

The protein belongs to the IPP transferase family. Monomer. Mg(2+) is required as a cofactor.

It catalyses the reaction adenosine(37) in tRNA + dimethylallyl diphosphate = N(6)-dimethylallyladenosine(37) in tRNA + diphosphate. Functionally, catalyzes the transfer of a dimethylallyl group onto the adenine at position 37 in tRNAs that read codons beginning with uridine, leading to the formation of N6-(dimethylallyl)adenosine (i(6)A). The polypeptide is tRNA dimethylallyltransferase (Streptomyces avermitilis (strain ATCC 31267 / DSM 46492 / JCM 5070 / NBRC 14893 / NCIMB 12804 / NRRL 8165 / MA-4680)).